A 359-amino-acid polypeptide reads, in one-letter code: 3-dehydroquinate synthase (359 aa).

NAD(+) contacts are provided by residues 71-76 (DGEAYK), 105-109 (GVVGD), 129-130 (TT), Lys-142, and Lys-151. The Zn(2+) site is built by Glu-184, His-247, and His-264.

Belongs to the sugar phosphate cyclases superfamily. Dehydroquinate synthase family. It depends on Co(2+) as a cofactor. Zn(2+) is required as a cofactor. The cofactor is NAD(+).

The protein localises to the cytoplasm. The enzyme catalyses 7-phospho-2-dehydro-3-deoxy-D-arabino-heptonate = 3-dehydroquinate + phosphate. It participates in metabolic intermediate biosynthesis; chorismate biosynthesis; chorismate from D-erythrose 4-phosphate and phosphoenolpyruvate: step 2/7. In terms of biological role, catalyzes the conversion of 3-deoxy-D-arabino-heptulosonate 7-phosphate (DAHP) to dehydroquinate (DHQ). The sequence is that of 3-dehydroquinate synthase from Burkholderia lata (strain ATCC 17760 / DSM 23089 / LMG 22485 / NCIMB 9086 / R18194 / 383).